The sequence spans 79 residues: MESIMARFVRHRKFCRFTAEKCINIDYKDLVTIQHSIIESGKIIPSRITGTRARYQRQLARAIKRARYLSLLPYTDHHQ.

It belongs to the bacterial ribosomal protein bS18 family. Part of the 30S ribosomal subunit. Forms a tight heterodimer with protein bS6.

Binds as a heterodimer with protein bS6 to the central domain of the 16S rRNA, where it helps stabilize the platform of the 30S subunit. The chain is Small ribosomal subunit protein bS18 from Blochmanniella pennsylvanica (strain BPEN).